The chain runs to 67 residues: Large ribosomal subunit protein uL29 (67 aa).

The protein belongs to the universal ribosomal protein uL29 family.

This Solibacter usitatus (strain Ellin6076) protein is Large ribosomal subunit protein uL29.